The following is a 232-amino-acid chain: uncharacterized protein (232 aa).

The disordered stretch occupies residues 119-145 (DEEYRENSKAPEAKARPSFVGEGRRLG). Positions 123 to 133 (RENSKAPEAKA) are enriched in basic and acidic residues.

This is an uncharacterized protein from Encephalitozoon cuniculi (strain GB-M1) (Microsporidian parasite).